The following is a 249-amino-acid chain: NAD(P)H-hydrate epimerase (249 aa).

A YjeF N-terminal domain is found at 11 to 233 (AQQIDVELMS…ELGKKHELNI (223 aa)). 62-66 (NQGGD) serves as a coordination point for (6S)-NADPHX. 2 residues coordinate K(+): Gln-63 and Asp-127. (6S)-NADPHX is bound by residues 131-137 (GFSFQPP) and Asp-162. Ser-165 is a binding site for K(+).

This sequence belongs to the NnrE/AIBP family. The cofactor is K(+).

The protein localises to the cytoplasm. The protein resides in the mitochondrion. It catalyses the reaction (6R)-NADHX = (6S)-NADHX. The enzyme catalyses (6R)-NADPHX = (6S)-NADPHX. Catalyzes the epimerization of the S- and R-forms of NAD(P)HX, a damaged form of NAD(P)H that is a result of enzymatic or heat-dependent hydration. This is a prerequisite for the S-specific NAD(P)H-hydrate dehydratase to allow the repair of both epimers of NAD(P)HX. In Cryptococcus neoformans var. neoformans serotype D (strain JEC21 / ATCC MYA-565) (Filobasidiella neoformans), this protein is NAD(P)H-hydrate epimerase.